The following is a 285-amino-acid chain: UPF0354 protein SACOL1793 (285 aa).

This sequence belongs to the UPF0354 family.

This chain is UPF0354 protein SACOL1793, found in Staphylococcus aureus (strain COL).